The following is a 256-amino-acid chain: Chlorophyll a-b binding protein CP24 10B, chloroplastic (256 aa).

The N-terminal 45 residues, 1-45, are a transit peptide targeting the chloroplast; that stretch reads MTTTSATAVLNGLSSSFLTGGKKTQALLGAHVTARVTTPKRFVVA. Transmembrane regions (helical) follow at residues 106–126 and 134–154; these read WAMA…IPWF and AIAP…MGWV.

The protein belongs to the ELIP/psbS family.

It is found in the plastid. The protein localises to the chloroplast thylakoid membrane. The protein is Chlorophyll a-b binding protein CP24 10B, chloroplastic (CAP10B) of Solanum lycopersicum (Tomato).